A 268-amino-acid chain; its full sequence is Ribonuclease P protein subunit p30 (268 aa).

Residue alanine 2 is modified to N-acetylalanine. Phosphoserine is present on serine 251.

It belongs to the eukaryotic/archaeal RNase P protein component 3 family. In terms of assembly, component of nuclear RNase P and RNase MRP ribonucleoproteins. RNase P consists of a catalytic RNA moiety and about 10 protein subunits; POP1, POP4, POP5, POP7, RPP14, RPP21, RPP25, RPP30, RPP38 and RPP40. Within the RNase P complex, POP1, POP7 and RPP25 form the 'finger' subcomplex, POP5, RPP14, RPP40 and homodimeric RPP30 form the 'palm' subcomplex, and RPP21, POP4 and RPP38 form the 'wrist' subcomplex. All subunits of the RNase P complex interact with the catalytic RNA. Several subunits of RNase P are also part of the RNase MRP complex. RNase MRP consists of a catalytic RNA moiety and about 8 protein subunits; POP1, POP7, RPP25, RPP30, RPP38, RPP40 and possibly also POP4 and POP5.

Its subcellular location is the nucleus. It localises to the nucleolus. Its function is as follows. Component of ribonuclease P, a ribonucleoprotein complex that generates mature tRNA molecules by cleaving their 5'-ends. Also a component of the MRP ribonuclease complex, which cleaves pre-rRNA sequences. The sequence is that of Ribonuclease P protein subunit p30 (Rpp30) from Mus musculus (Mouse).